Reading from the N-terminus, the 732-residue chain is Cullin-3B (732 aa).

The Cullin neddylation domain maps to 662–724; sequence DRKPQIEAAI…RDFLERDNTD (63 aa). Lys676 participates in a covalent cross-link: Glycyl lysine isopeptide (Lys-Gly) (interchain with G-Cter in NEDD8).

The protein belongs to the cullin family. Interacts with BTB/POZ-MATH proteins BPM1 and BPM3. In terms of processing, neddylated. Deneddylated via its interaction with the COP9 signalosome (CSN) complex.

Its pathway is protein modification; protein ubiquitination. Functionally, component of the cullin-RING ubiquitin ligases (CRL), or CUL3-RBX1-BTB protein E3 ligase complexes which mediate the ubiquitination and subsequent proteasomal degradation of target proteins. The functional specificity of the CRL complex depends on the BTB domain-containing protein as the substrate recognition component. Involved in embryo pattern formation and endosperm development. Required for the normal division and organization of the root stem cells and columella root cap cells. Regulates primary root growth by an unknown pathway, but in an ethylene-dependent manner. Functions in distal root patterning, by an ethylene-independent mechanism. Functionally redundant with CUL3A. This chain is Cullin-3B (CUL3B), found in Arabidopsis thaliana (Mouse-ear cress).